A 515-amino-acid chain; its full sequence is Bifunctional purine biosynthesis protein PurH (515 aa).

One can recognise an MGS-like domain in the interval 1–145; sequence MTKRVLISVS…KNHASVTVVV (145 aa).

The protein belongs to the PurH family.

The enzyme catalyses (6R)-10-formyltetrahydrofolate + 5-amino-1-(5-phospho-beta-D-ribosyl)imidazole-4-carboxamide = 5-formamido-1-(5-phospho-D-ribosyl)imidazole-4-carboxamide + (6S)-5,6,7,8-tetrahydrofolate. It catalyses the reaction IMP + H2O = 5-formamido-1-(5-phospho-D-ribosyl)imidazole-4-carboxamide. Its pathway is purine metabolism; IMP biosynthesis via de novo pathway; 5-formamido-1-(5-phospho-D-ribosyl)imidazole-4-carboxamide from 5-amino-1-(5-phospho-D-ribosyl)imidazole-4-carboxamide (10-formyl THF route): step 1/1. It functions in the pathway purine metabolism; IMP biosynthesis via de novo pathway; IMP from 5-formamido-1-(5-phospho-D-ribosyl)imidazole-4-carboxamide: step 1/1. This is Bifunctional purine biosynthesis protein PurH from Streptococcus pneumoniae (strain 70585).